A 202-amino-acid polypeptide reads, in one-letter code: Na(+)-translocating NADH-quinone reductase subunit E (202 aa).

6 helical membrane passes run 11-31 (SVFI…FLAM), 35-55 (INAA…TVPA), 81-101 (FLSF…MEMV), 114-134 (GVFL…LFMV), 144-164 (VVYG…LAGI), and 180-200 (LGIT…FGGI).

This sequence belongs to the NqrDE/RnfAE family. Composed of six subunits; NqrA, NqrB, NqrC, NqrD, NqrE and NqrF.

Its subcellular location is the cell inner membrane. The enzyme catalyses a ubiquinone + n Na(+)(in) + NADH + H(+) = a ubiquinol + n Na(+)(out) + NAD(+). In terms of biological role, NQR complex catalyzes the reduction of ubiquinone-1 to ubiquinol by two successive reactions, coupled with the transport of Na(+) ions from the cytoplasm to the periplasm. NqrA to NqrE are probably involved in the second step, the conversion of ubisemiquinone to ubiquinol. The sequence is that of Na(+)-translocating NADH-quinone reductase subunit E from Cellvibrio japonicus (strain Ueda107) (Pseudomonas fluorescens subsp. cellulosa).